Here is an 80-residue protein sequence, read N- to C-terminus: CLAVATA3/ESR (CLE)-related protein 4 (80 aa).

An N-terminal signal peptide occupies residues 1–22 (MASFKLWVCLILLLLEFSVHQC). Residues 55-80 (SKDGQTVLGTLDSKRLSPGGPDPRHH) are disordered. Pro72 and Pro75 each carry hydroxyproline. Pro75 carries O-linked (Ara...) hydroxyproline glycosylation.

The protein belongs to the CLV3/ESR signal peptide family. Post-translationally, the O-glycosylation (arabinosylation) of the hydroxyproline Pro-75 enhances binding affinity of the CLE4p peptide for its receptor. As to expression, expressed in roots and seedlings.

It localises to the secreted. The protein localises to the extracellular space. Extracellular signal peptide that regulates cell fate. The sequence is that of CLAVATA3/ESR (CLE)-related protein 4 from Arabidopsis thaliana (Mouse-ear cress).